Consider the following 265-residue polypeptide: uncharacterized protein (265 aa).

The disordered stretch occupies residues 122 to 145; the sequence is THYRDNGQTPPRDTRPHGGISLGG.

This is an uncharacterized protein from Zymomonas mobilis subsp. mobilis (strain ATCC 31821 / ZM4 / CP4).